We begin with the raw amino-acid sequence, 238 residues long: Ribonuclease 3 (238 aa).

Positions 4 to 127 (IEEFEKRLGY…TMGAIYLETG (124 aa)) constitute an RNase III domain. Glutamate 40 provides a ligand contact to Mg(2+). Aspartate 44 is a catalytic residue. The Mg(2+) site is built by asparagine 113 and glutamate 116. Glutamate 116 is a catalytic residue. Positions 154–223 (DYKTALQELT…ARIALEIFHR (70 aa)) constitute a DRBM domain.

It belongs to the ribonuclease III family. As to quaternary structure, homodimer. Mg(2+) serves as cofactor.

The protein resides in the cytoplasm. The enzyme catalyses Endonucleolytic cleavage to 5'-phosphomonoester.. Digests double-stranded RNA. Involved in the processing of primary rRNA transcript to yield the immediate precursors to the large and small rRNAs (23S and 16S). Processes some mRNAs, and tRNAs when they are encoded in the rRNA operon. Processes pre-crRNA and tracrRNA of type II CRISPR loci if present in the organism. The sequence is that of Ribonuclease 3 from Wolinella succinogenes (strain ATCC 29543 / DSM 1740 / CCUG 13145 / JCM 31913 / LMG 7466 / NCTC 11488 / FDC 602W) (Vibrio succinogenes).